Consider the following 297-residue polypeptide: Probable endonuclease 4 (297 aa).

Residues histidine 68, histidine 109, glutamate 144, aspartate 178, histidine 181, histidine 213, aspartate 226, histidine 228, and glutamate 258 each coordinate Zn(2+).

This sequence belongs to the AP endonuclease 2 family. It depends on Zn(2+) as a cofactor.

The catalysed reaction is Endonucleolytic cleavage to 5'-phosphooligonucleotide end-products.. Its function is as follows. Endonuclease IV plays a role in DNA repair. It cleaves phosphodiester bonds at apurinic or apyrimidinic (AP) sites, generating a 3'-hydroxyl group and a 5'-terminal sugar phosphate. In Lysinibacillus sphaericus (strain C3-41), this protein is Probable endonuclease 4.